The primary structure comprises 353 residues: Lactosylceramide 4-alpha-galactosyltransferase (353 aa).

Over 1 to 22 the chain is Cytoplasmic; it reads MSKPPDLLLRLLRGAPRQRVCT. A helical; Signal-anchor for type II membrane protein transmembrane segment spans residues 23–43; sequence LFIIGFKFTFFVSIMIYWHVV. Over 44-353 the chain is Lumenal; sequence GEPKEKGQLY…TTHEAMKMYL (310 aa). An N-linked (GlcNAc...) asparagine glycan is attached at Asn-121. Residues 192 to 194 carry the DXD motif motif; sequence DTD. N-linked (GlcNAc...) asparagine glycosylation occurs at Asn-203.

It belongs to the glycosyltransferase 32 family. In terms of tissue distribution, ubiquitous. Highly expressed in kidney, heart, spleen, liver, testis and placenta.

It is found in the golgi apparatus membrane. The enzyme catalyses a beta-D-Gal-(1-&gt;4)-beta-D-Glc-(1&lt;-&gt;1)-Cer(d18:1(4E)) + UDP-alpha-D-galactose = a globoside Gb3Cer (d18:1(4E)) + UDP + H(+). The catalysed reaction is a beta-D-Gal-(1&lt;-&gt;1')-ceramide + UDP-alpha-D-galactose = alpha-D-Gal-(1-&gt;4)-beta-D-Gal-(1&lt;-&gt;1')-Cer + UDP + H(+). The protein operates within glycolipid biosynthesis. Its function is as follows. Catalyzes the transfer of galactose from UDP-alpha-D-galactose to lactosylceramide/beta-D-galactosyl-(1-&gt;4)-beta-D-glucosyl-(1&lt;-&gt;1)-ceramide(d18:1(4E)) to produce globotriaosylceramide/globoside Gb3Cer (d18:1(4E)). Also able to transfer galactose to galactosylceramide/beta-D-Gal-(1&lt;-&gt;1')-Cer. Globoside Gb3Cer is a glycosphingolipid of the globo serie, one of the major types of neutral root structures of glycosphingolipids, that constitute a significant portion of mammalian cell membranes. Globotriaosylceramide/globoside Gb3Cer in blood and tissue cell membranes is the antigen Pk of blood histogroup P. Functionally, (Microbial infection) Globotriaosylceramide is one of the cellular ligands for bacterial verotoxins. This is Lactosylceramide 4-alpha-galactosyltransferase (A4GALT) from Homo sapiens (Human).